We begin with the raw amino-acid sequence, 389 residues long: PqqA peptide cyclase (389 aa).

In terms of domain architecture, Radical SAM core spans 20–235 (VGLPLWLLAE…TNEYRARLEA (216 aa)). Cys34, Cys38, and Cys41 together coordinate [4Fe-4S] cluster.

The protein belongs to the radical SAM superfamily. PqqE family. As to quaternary structure, interacts with PqqD. The interaction is necessary for activity of PqqE. It depends on [4Fe-4S] cluster as a cofactor.

The enzyme catalyses [PQQ precursor protein] + S-adenosyl-L-methionine = E-Y cross-linked-[PQQ precursor protein] + 5'-deoxyadenosine + L-methionine + H(+). The protein operates within cofactor biosynthesis; pyrroloquinoline quinone biosynthesis. In terms of biological role, catalyzes the cross-linking of a glutamate residue and a tyrosine residue in the PqqA protein as part of the biosynthesis of pyrroloquinoline quinone (PQQ). The polypeptide is PqqA peptide cyclase (Pseudomonas fluorescens (strain ATCC BAA-477 / NRRL B-23932 / Pf-5)).